The following is a 28-amino-acid chain: Heat shock protein 81 (28 aa).

ATP is bound by residues Asn-5 and Asp-21.

The protein belongs to the heat shock protein 90 family. In terms of assembly, homodimer.

It localises to the cytoplasm. Its function is as follows. Putative molecular chaperone that may promote the maturation, structural maintenance and proper regulation of specific target proteins. The protein is Heat shock protein 81 of Pseudotsuga menziesii (Douglas-fir).